The following is a 211-amino-acid chain: uncharacterized protein (211 aa).

This is an uncharacterized protein from Dictyostelium discoideum (Social amoeba).